Consider the following 894-residue polypeptide: Alpha-actinin-2 (894 aa).

The segment at 1–254 (MNQIEPGVQY…IMTYVSCFYH (254 aa)) is actin-binding. 2 consecutive Calponin-homology (CH) domains span residues 38-142 (KQQR…LRFA) and 151-257 (TSAK…HAFA). Position 237 is a phosphothreonine (Thr237). Spectrin repeat units lie at residues 281-391 (RLME…WLLN), 401-506 (HLAE…ALER), 516-627 (QLHL…SLQE), and 637-740 (RLRR…EVET). EF-hand domains are found at residues 753–788 (EQMN…MGYD) and 789–824 (LGEA…ETAD). Ca(2+) is bound by residues Asp766, Asn770, Asp777, Asp802, Asn804, and Thr808.

Belongs to the alpha-actinin family. In terms of assembly, homodimer; antiparallel. Also forms heterodimers with ACTN3. Interacts with ADAM12, MYOZ1, MYOZ2 and MYOZ3. Interacts via its C-terminal region with the LDB3 PDZ domain. Interacts with XIRP2. Interacts with DST (via N-terminus). Interacts with PARVB. Interacts with SYNPO2. In terms of processing, ubiquitinated by FBXL22, leading to proteasomal degradation.

Its subcellular location is the cytoplasm. The protein resides in the myofibril. It localises to the sarcomere. It is found in the z line. In terms of biological role, F-actin cross-linking protein which is thought to anchor actin to a variety of intracellular structures. This is a bundling protein. The sequence is that of Alpha-actinin-2 (ACTN2) from Bos taurus (Bovine).